Consider the following 100-residue polypeptide: GGGWNGWNGLGGGWNGLGVGWSRLDGGYGGGCGSYGGEGIGNVGVADELPVGGVTAVGGRVPIIGGVEYGGPARAAGAVSICGHCAPTCGCGRAGLGGYY.

Positions 1–33 (GGGWNGWNGLGGGWNGLGVGWSRLDGGYGGGCG) are left arm. A central domain region spans residues 34–81 (SYGGEGIGNVGVADELPVGGVTAVGGRVPIIGGVEYGGPARAAGAVSI). Residues 82–100 (CGHCAPTCGCGRAGLGGYY) form a right arm region.

It belongs to the chorion protein family.

Functionally, this protein is one of many from the eggshell of the silk moth. The sequence is that of Chorion class A protein M2774 from Bombyx mori (Silk moth).